Here is a 101-residue protein sequence, read N- to C-terminus: uncharacterized protein (101 aa).

Positions 65 to 79 (QEAAAPAGPQEPAEA) are enriched in low complexity. The interval 65–101 (QEAAAPAGPQEPAEASGDAGKKEEVEEEEIEIDFGMF) is disordered. Positions 89 to 101 (VEEEEIEIDFGMF) are enriched in acidic residues.

This is an uncharacterized protein from Encephalitozoon cuniculi (strain GB-M1) (Microsporidian parasite).